Consider the following 375-residue polypeptide: Chaperone protein DnaJ (375 aa).

A J domain is found at Asp5–Gly70. A CR-type zinc finger spans residues Gly136–Glu214. Zn(2+) is bound by residues Cys149, Cys152, Cys166, Cys169, Cys188, Cys191, Cys202, and Cys205. CXXCXGXG motif repeat units follow at residues Cys149–Gly156, Cys166–Gly173, Cys188–Gly195, and Cys202–Gly209.

The protein belongs to the DnaJ family. In terms of assembly, homodimer. Zn(2+) serves as cofactor.

Its subcellular location is the cytoplasm. In terms of biological role, participates actively in the response to hyperosmotic and heat shock by preventing the aggregation of stress-denatured proteins and by disaggregating proteins, also in an autonomous, DnaK-independent fashion. Unfolded proteins bind initially to DnaJ; upon interaction with the DnaJ-bound protein, DnaK hydrolyzes its bound ATP, resulting in the formation of a stable complex. GrpE releases ADP from DnaK; ATP binding to DnaK triggers the release of the substrate protein, thus completing the reaction cycle. Several rounds of ATP-dependent interactions between DnaJ, DnaK and GrpE are required for fully efficient folding. Also involved, together with DnaK and GrpE, in the DNA replication of plasmids through activation of initiation proteins. The polypeptide is Chaperone protein DnaJ (Rhizobium johnstonii (strain DSM 114642 / LMG 32736 / 3841) (Rhizobium leguminosarum bv. viciae)).